The chain runs to 150 residues: Leukotriene C4 synthase (150 aa).

At 1 to 6 the chain is on the cytoplasmic side; that stretch reads MKDEVA. A helical membrane pass occupies residues 7–27; the sequence is LLATVTLVGVLLQAYFSLQVI. At 28–48 the chain is on the lumenal side; that stretch reads SARRAFHVSPPLTSGPPEFER. Arg-30 is a binding site for glutathione. The active-site Proton donor is the Arg-31. A Phosphoserine modification is found at Ser-36. The helical transmembrane segment at 49-69 threads the bilayer; that stretch reads VFRAQVNCSEYFPLFLATLWV. Residues 51-55, Gln-53, and 58-59 each bind glutathione; these read RAQVN and EY. Topologically, residues 70 to 73 are cytoplasmic; the sequence is AGIF. The chain crosses the membrane as a helical span at residues 74-94; it reads FHEGAAALCGLFYLFARLRYF. 93 to 97 contacts glutathione; that stretch reads YFQGY. Over 95 to 104 the chain is Lumenal; that stretch reads QGYARSAQLR. Arg-104 functions as the Proton acceptor in the catalytic mechanism. A helical transmembrane segment spans residues 105 to 124; the sequence is LTPLYASARALWLLVAMAAL. Over 125–150 the chain is Cytoplasmic; it reads GLLVHFLPGTLRTALFRWLQMLLPMA.

It belongs to the MAPEG family. As to quaternary structure, homotrimer. Interacts with ALOX5AP and ALOX5. Post-translationally, phosphorylation at Ser-36 by RPS6KB1 inhibits the leukotriene-C4 synthase activity. As to expression, widely expressed.

Its subcellular location is the nucleus outer membrane. It localises to the endoplasmic reticulum membrane. The protein localises to the nucleus membrane. It catalyses the reaction leukotriene C4 = leukotriene A4 + glutathione. The catalysed reaction is (13S,14S)-epoxy-(4Z,7Z,9E,11E,16Z,19Z)-docosahexaenoate + glutathione = (13R)-S-glutathionyl-(14S)-hydroxy-(4Z,7Z,9E,11E,16Z,19Z)-docosahexaenoate. It participates in lipid metabolism; leukotriene C4 biosynthesis. Inhibited by MK886. Its function is as follows. Catalyzes the conjugation of leukotriene A4 with reduced glutathione (GSH) to form leukotriene C4 with high specificity. Can also catalyze the transfer of a glutathionyl group from glutathione (GSH) to 13(S),14(S)-epoxy-docosahexaenoic acid to form maresin conjugate in tissue regeneration 1 (MCTR1), a bioactive lipid mediator that possess potent anti-inflammatory and proresolving actions. The polypeptide is Leukotriene C4 synthase (Ltc4s) (Mus musculus (Mouse)).